Here is a 293-residue protein sequence, read N- to C-terminus: Small ribosomal subunit biogenesis GTPase RsgA (293 aa).

The 161-residue stretch at 63–223 (QNELVRPPIA…VADTPGFSAL (161 aa)) folds into the CP-type G domain. Residues 112–115 (SKID) and 166–174 (GQSGVGKSS) contribute to the GTP site. Zn(2+) is bound by residues Cys247, Cys252, His254, and Cys260.

The protein belongs to the TRAFAC class YlqF/YawG GTPase family. RsgA subfamily. As to quaternary structure, monomer. Associates with 30S ribosomal subunit, binds 16S rRNA. Zn(2+) is required as a cofactor.

It is found in the cytoplasm. Its function is as follows. One of several proteins that assist in the late maturation steps of the functional core of the 30S ribosomal subunit. Helps release RbfA from mature subunits. May play a role in the assembly of ribosomal proteins into the subunit. Circularly permuted GTPase that catalyzes slow GTP hydrolysis, GTPase activity is stimulated by the 30S ribosomal subunit. The sequence is that of Small ribosomal subunit biogenesis GTPase RsgA from Geobacillus kaustophilus (strain HTA426).